A 282-amino-acid chain; its full sequence is Energy-coupling factor transporter ATP-binding protein EcfA1 (282 aa).

Residues Ile-9 to Asp-243 enclose the ABC transporter domain. Position 43-50 (Gly-43–Ser-50) interacts with ATP.

Belongs to the ABC transporter superfamily. Energy-coupling factor EcfA family. Forms a stable energy-coupling factor (ECF) transporter complex composed of 2 membrane-embedded substrate-binding proteins (S component), 2 ATP-binding proteins (A component) and 2 transmembrane proteins (T component).

The protein resides in the cell membrane. Its function is as follows. ATP-binding (A) component of a common energy-coupling factor (ECF) ABC-transporter complex. Unlike classic ABC transporters this ECF transporter provides the energy necessary to transport a number of different substrates. This chain is Energy-coupling factor transporter ATP-binding protein EcfA1, found in Ligilactobacillus salivarius (strain UCC118) (Lactobacillus salivarius).